Reading from the N-terminus, the 234-residue chain is Probable septum site-determining protein MinC (234 aa).

It belongs to the MinC family. In terms of assembly, interacts with MinD and FtsZ.

Its function is as follows. Cell division inhibitor that blocks the formation of polar Z ring septums. Rapidly oscillates between the poles of the cell to destabilize FtsZ filaments that have formed before they mature into polar Z rings. Prevents FtsZ polymerization. This is Probable septum site-determining protein MinC from Pseudoalteromonas translucida (strain TAC 125).